The chain runs to 511 residues: Maturase K (511 aa).

This sequence belongs to the intron maturase 2 family. MatK subfamily.

The protein resides in the plastid. Its subcellular location is the chloroplast. Functionally, usually encoded in the trnK tRNA gene intron. Probably assists in splicing its own and other chloroplast group II introns. This Bromus inermis (Smooth brome grass) protein is Maturase K.